Consider the following 1026-residue polypeptide: MMCFFFFSLQPCLFKLPLPLPLKKNTAMLSFWNPYLRGFKAPTPATKSKPKASTIYHRLIPKCFKKDERENGGIFAIETAIPPTAFYLDSELLVLPENKSSLWANETLGNCHSIQELMFHVYDIVEVVYAADRCDSIPPHLQADIVPSGIVLKLYGRTETNQSVCVNVFGQKVYFYVYNDSYSNLQRDVQHILQETGHRSTGLHLCSTQKKFLSGYSTSSHEVYQITLGSSSAMRSLASGLEQIGYRVFEANVDASTRFIVDNKFSTFGWYTCTSPLARPRVHQDAHTHLEYDCSVGDIQYHAERLDWPQYNILSFDIECLGESGFPSADKDEDMIIQISCVIWTVGGDKKQECILLSVGTCDLIENVKVYEFPSEMDLLYGFFTLLRDYGIEMITGYNICNFDFPYILNRAQNVYNIKPEDFSKTKTNSLFYVYTPQEGNFMRSHSKVKMSGVVVIDMYQVCRDKLNLSNYKLNTVAKECLGEKKNDVSYKDIPILFKGSSKDRAKLGMYCVQDAVLVIDLLKHFMTHIEITEIAKIANIPTRRVLSDGQQIRVFTCLLAAAQERDYILPMPVTGSQEGYQGATVINPISGFYNTPVLVVDFASLYPSIIQAHNLCYSTLIKQQDLPKFTNLTANDYETFMISGGPVHFVKKHKTESLLASLLKTWLAKRKSIKKELEQCQDAKMKTILDKQQLAIKVTCNSVYGFTGVASGMLPCLMIAETVTLQGRTMLEKTKQFVENVTVEYLQKICNFEVQCLPQHPNPKFRVVYGDTDSLFIKCEGFAMDTVIKFGDALASHTSSVLFASPIKLESEKVFKCLMLLTKKRYVGILSNNKILMKGVDLVRKTACVYVQEVTRAVLELLLRDEEVKVAAQTLSYSPVANCFKTEPLLGFLKIIDILNQSYSDLKSNKVPVANLTYSTELSKPFTEYKTTNLPHLAVYKKLAMRNEELPQIHDRISYVFVKSNGHLVSDMAEDPTYAEQNKIPIASDWYFDKIIHGVANILQCVFNNNTSATVEVLYNFVRNP.

A coiled-coil region spans residues 664-695 (LKTWLAKRKSIKKELEQCQDAKMKTILDKQQL).

The protein belongs to the DNA polymerase type-B family.

The protein localises to the host nucleus. The catalysed reaction is DNA(n) + a 2'-deoxyribonucleoside 5'-triphosphate = DNA(n+1) + diphosphate. Its function is as follows. Replicates viral genomic DNA. The protein is DNA polymerase catalytic subunit (9) of Alcelaphine herpesvirus 1 (strain C500) (AlHV-1).